Here is a 160-residue protein sequence, read N- to C-terminus: 3-hydroxyacyl-[acyl-carrier-protein] dehydratase FabZ (160 aa).

H59 is an active-site residue.

It belongs to the thioester dehydratase family. FabZ subfamily.

It localises to the cytoplasm. The catalysed reaction is a (3R)-hydroxyacyl-[ACP] = a (2E)-enoyl-[ACP] + H2O. Involved in unsaturated fatty acids biosynthesis. Catalyzes the dehydration of short chain beta-hydroxyacyl-ACPs and long chain saturated and unsaturated beta-hydroxyacyl-ACPs. This chain is 3-hydroxyacyl-[acyl-carrier-protein] dehydratase FabZ, found in Burkholderia thailandensis (strain ATCC 700388 / DSM 13276 / CCUG 48851 / CIP 106301 / E264).